Consider the following 475-residue polypeptide: Exodeoxyribonuclease 7 large subunit (475 aa).

The interval 452 to 475 (DHGLNRSSKSKRIKSKQDDQGTLF) is disordered. Basic and acidic residues predominate over residues 466 to 475 (SKQDDQGTLF).

The protein belongs to the XseA family. In terms of assembly, heterooligomer composed of large and small subunits.

The protein resides in the cytoplasm. The catalysed reaction is Exonucleolytic cleavage in either 5'- to 3'- or 3'- to 5'-direction to yield nucleoside 5'-phosphates.. In terms of biological role, bidirectionally degrades single-stranded DNA into large acid-insoluble oligonucleotides, which are then degraded further into small acid-soluble oligonucleotides. This is Exodeoxyribonuclease 7 large subunit from Bartonella quintana (strain Toulouse) (Rochalimaea quintana).